The following is a 130-amino-acid chain: Large ribosomal subunit protein eL22 (130 aa).

Positions 1–21 (MPGKTAQKGGRPSGKGKKKKQ) are disordered. Positions 17-20 (KKKK) match the Nuclear localization signal motif.

The protein belongs to the eukaryotic ribosomal protein eL22 family.

The protein is Large ribosomal subunit protein eL22 (RPL22) of Tripneustes gratilla (Hawaian sea urchin).